The sequence spans 310 residues: Homoserine kinase (310 aa).

85-95 (PKGLGLGSSGA) contributes to the ATP binding site.

The protein belongs to the GHMP kinase family. Homoserine kinase subfamily.

It localises to the cytoplasm. The enzyme catalyses L-homoserine + ATP = O-phospho-L-homoserine + ADP + H(+). It participates in amino-acid biosynthesis; L-threonine biosynthesis; L-threonine from L-aspartate: step 4/5. Catalyzes the ATP-dependent phosphorylation of L-homoserine to L-homoserine phosphate. This is Homoserine kinase from Thermoplasma acidophilum (strain ATCC 25905 / DSM 1728 / JCM 9062 / NBRC 15155 / AMRC-C165).